The primary structure comprises 445 residues: Fasciclin-like arabinogalactan protein 16 (445 aa).

The N-terminal stretch at 1–23 (MDSSYGATKFLLLLFLTTSIATA) is a signal peptide. FAS1 domains follow at residues 35–173 (NSNS…ERLL) and 257–400 (VKDF…DGVL). Residues Asn72 and Asn279 are each glycosylated (N-linked (GlcNAc...) asparagine).

The protein belongs to the fasciclin-like AGP family.

The protein localises to the secreted. In terms of biological role, may be a cell surface adhesion protein. This is Fasciclin-like arabinogalactan protein 16 (FLA16) from Arabidopsis thaliana (Mouse-ear cress).